A 162-amino-acid polypeptide reads, in one-letter code: MAAGQGGWLRPALGLRLLLATAFQAVSALGAEFSSEACRELGFSSNLLCSSCDLLGQFNLLPLDPVCRGCCQEEAQFETKKLYAGAILEVCGUKLGRFPQVQAFVRSDKPKLFRGLQIKYVRGSDPVLKLLDDNGNIAEELSILKWNTDSVEEFLSEKLERI.

The N-terminal stretch at 1–28 (MAAGQGGWLRPALGLRLLLATAFQAVSA) is a signal peptide. Position 93 (U93) is a non-standard amino acid, selenocysteine.

Belongs to the selenoprotein M/F family. As to quaternary structure, forms a tight complex with UGGT1/UGCGL1. Interacts with UGGT2/UGCGL2. Interacts with RDH11. Highest levels in prostate, lower levels in brain, lung, thyroid gland, and large intestine.

The protein localises to the endoplasmic reticulum lumen. In terms of biological role, may be involved in redox reactions associated with the formation of disulfide bonds. May contribute to the quality control of protein folding in the endoplasmic reticulum. May regulate protein folding by enhancing the catalytic activity of UGGT1/UGCGL1 and UGGT2/UGCGL2. The protein is Selenoprotein F of Rattus norvegicus (Rat).